Consider the following 119-residue polypeptide: Large ribosomal subunit protein bL20 (119 aa).

It belongs to the bacterial ribosomal protein bL20 family.

Functionally, binds directly to 23S ribosomal RNA and is necessary for the in vitro assembly process of the 50S ribosomal subunit. It is not involved in the protein synthesizing functions of that subunit. The polypeptide is Large ribosomal subunit protein bL20 (Streptococcus thermophilus (strain ATCC BAA-491 / LMD-9)).